Consider the following 299-residue polypeptide: tRNA dimethylallyltransferase (299 aa).

An ATP-binding site is contributed by Gly-11–Thr-18. Thr-13–Thr-18 lines the substrate pocket. Positions Asp-36–Gln-39 are interaction with substrate tRNA.

It belongs to the IPP transferase family. In terms of assembly, monomer. Mg(2+) serves as cofactor.

It catalyses the reaction adenosine(37) in tRNA + dimethylallyl diphosphate = N(6)-dimethylallyladenosine(37) in tRNA + diphosphate. Functionally, catalyzes the transfer of a dimethylallyl group onto the adenine at position 37 in tRNAs that read codons beginning with uridine, leading to the formation of N6-(dimethylallyl)adenosine (i(6)A). In Streptococcus pyogenes serotype M18 (strain MGAS8232), this protein is tRNA dimethylallyltransferase.